Here is a 164-residue protein sequence, read N- to C-terminus: DNA-directed RNA polymerase 19 kDa subunit (164 aa).

Over residues 1–35 (MADTDDIIDYESDDLTEYEDDDEEEEDGESLETSD) the composition is skewed to acidic residues. The interval 1–39 (MADTDDIIDYESDDLTEYEDDDEEEEDGESLETSDIDPK) is disordered.

The protein belongs to the poxviridae DNA-directed RNA polymerase 19 kDa subunit family. The DNA-dependent RNA polymerase used for intermediate and late genes expression consists of eight subunits Rpo30/OPG66, Rpo7/OPG90, Rpo22/OPG103, Rpo147/OPG105, Rpo18/OPG119, Rpo19/OPG131, Rpo132/OPG151 and Rpo35/OPG156. The same holoenzyme, with the addition of the transcription-specificity factor OPG109, is used for early gene expression.

Its subcellular location is the virion. It carries out the reaction RNA(n) + a ribonucleoside 5'-triphosphate = RNA(n+1) + diphosphate. Its function is as follows. Part of the DNA-dependent RNA polymerase which catalyzes the transcription of viral DNA into RNA using the four ribonucleoside triphosphates as substrates. Responsible for the transcription of early, intermediate and late genes. DNA-dependent RNA polymerase associates with the early transcription factor (ETF), itself composed of OPG118 and OPG133, thereby allowing the early genes transcription. Late transcription, and probably also intermediate transcription, require newly synthesized RNA polymerase. The protein is DNA-directed RNA polymerase 19 kDa subunit (OPG131) of Variola virus (isolate Human/India/Ind3/1967) (VARV).